We begin with the raw amino-acid sequence, 154 residues long: Jupiter microtubule associated homolog 1 (154 aa).

Position 1 is an N-acetylmethionine (Met-1). Polar residues predominate over residues Met-1–Arg-19. The tract at residues Met-1–Gly-154 is disordered. Thr-2 carries the N-acetylthreonine; in Hematological and neurological expressed 1 protein, N-terminally processed modification. Residues Ser-28 and Ser-31 each carry the phosphoserine modification. At Thr-54 the chain carries Phosphothreonine. 5 positions are modified to phosphoserine: Ser-71, Ser-80, Ser-87, Ser-88, and Ser-92. Polar residues predominate over residues Ser-80–Asn-91. Residues Leu-96–Val-108 show a composition bias toward basic and acidic residues. Pro residues predominate over residues Pro-125–Val-138. Residue Ser-131 is modified to Phosphoserine. Position 148 is an N6-acetyllysine (Lys-148).

Belongs to the JUPITER family. Interacts with the complex composed, at least, of APC, CTNNB1 and GSK3B; the interaction takes place with the inactive form of GSK3B (phosphorylated at 'Ser-9').

It is found in the nucleus. Its subcellular location is the cytoplasm. In terms of biological role, modulates negatively AKT-mediated GSK3B signaling. Induces CTNNB1 'Ser-33' phosphorylation and degradation through the suppression of the inhibitory 'Ser-9' phosphorylation of GSK3B, which represses the function of the APC:CTNNB1:GSK3B complex and the interaction with CDH1/E-cadherin in adherent junctions. Plays a role in the regulation of cell cycle and cell adhesion. Has an inhibitory role on AR-signaling pathway through the induction of receptor proteasomal degradation. In Bos taurus (Bovine), this protein is Jupiter microtubule associated homolog 1.